We begin with the raw amino-acid sequence, 424 residues long: Deoxyguanosinetriphosphate triphosphohydrolase-like protein (424 aa).

Residues 1–24 form a disordered region; sequence MYPYSDADAFRRHPERAKSSQLRT. Over residues 8-18 the composition is skewed to basic and acidic residues; the sequence is DAFRRHPERAK. Positions 67 to 217 constitute an HD domain; the sequence is RLTHSLEVAQ…MDFSDDIAYS (151 aa).

Belongs to the dGTPase family. Type 2 subfamily.

The chain is Deoxyguanosinetriphosphate triphosphohydrolase-like protein from Corynebacterium glutamicum (strain R).